We begin with the raw amino-acid sequence, 592 residues long: Aspartate--tRNA(Asp/Asn) ligase (592 aa).

Residue Glu-177 coordinates L-aspartate. The aspartate stretch occupies residues 201–204 (QIFK). L-aspartate is bound by residues Arg-223 and His-452. 223 to 225 (RDE) provides a ligand contact to ATP. Glu-486 serves as a coordination point for ATP. Position 493 (Arg-493) interacts with L-aspartate. 538 to 541 (GIDR) provides a ligand contact to ATP.

Belongs to the class-II aminoacyl-tRNA synthetase family. Type 1 subfamily. In terms of assembly, homodimer.

The protein resides in the cytoplasm. The catalysed reaction is tRNA(Asx) + L-aspartate + ATP = L-aspartyl-tRNA(Asx) + AMP + diphosphate. Aspartyl-tRNA synthetase with relaxed tRNA specificity since it is able to aspartylate not only its cognate tRNA(Asp) but also tRNA(Asn). Reaction proceeds in two steps: L-aspartate is first activated by ATP to form Asp-AMP and then transferred to the acceptor end of tRNA(Asp/Asn). This is Aspartate--tRNA(Asp/Asn) ligase from Anaplasma marginale (strain Florida).